The sequence spans 171 residues: Xanthine-guanine phosphoribosyltransferase (171 aa).

5-phospho-alpha-D-ribose 1-diphosphate is bound by residues 51-52 and 106-114; these read RG and DDLVDSGKT. Aspartate 107 serves as a coordination point for Mg(2+). The guanine site is built by aspartate 110 and isoleucine 153. 2 residues coordinate xanthine: aspartate 110 and isoleucine 153. GMP-binding positions include 110 to 114 and 152 to 153; these read DSGKT and WI.

The protein belongs to the purine/pyrimidine phosphoribosyltransferase family. XGPT subfamily. Homotetramer. Mg(2+) serves as cofactor.

Its subcellular location is the cell inner membrane. The catalysed reaction is GMP + diphosphate = guanine + 5-phospho-alpha-D-ribose 1-diphosphate. The enzyme catalyses XMP + diphosphate = xanthine + 5-phospho-alpha-D-ribose 1-diphosphate. It catalyses the reaction IMP + diphosphate = hypoxanthine + 5-phospho-alpha-D-ribose 1-diphosphate. Its pathway is purine metabolism; GMP biosynthesis via salvage pathway; GMP from guanine: step 1/1. It functions in the pathway purine metabolism; XMP biosynthesis via salvage pathway; XMP from xanthine: step 1/1. Purine salvage pathway enzyme that catalyzes the transfer of the ribosyl-5-phosphate group from 5-phospho-alpha-D-ribose 1-diphosphate (PRPP) to the N9 position of the 6-oxopurines guanine and xanthine to form the corresponding ribonucleotides GMP (guanosine 5'-monophosphate) and XMP (xanthosine 5'-monophosphate), with the release of PPi. To a lesser extent, also acts on hypoxanthine. In Ruegeria pomeroyi (strain ATCC 700808 / DSM 15171 / DSS-3) (Silicibacter pomeroyi), this protein is Xanthine-guanine phosphoribosyltransferase.